A 371-amino-acid polypeptide reads, in one-letter code: MEKRPEDTRVVVGMSGGVDSSVAALLLKEQGYDVIGIFMKNWDDTDENGFCTATEDYEDVIRVCNQIGIPYYAVNFEKQYWEKVFQYFLDEYKAGRTPNPDVMCNKEIKFKAFLDHALSLGADYLATGHYARVDRSAGTVRMLRGLDENKDQTYFLNQLNQEQLSKVMFPIGDLQKSRVREIAKEAELATAAKKDSTGICFIGERNFKTFLSQYLPAQPGDMMTMDGEVKGRHDGLMYYTIGQRHGLGIGGSGEPWFAVGKDLEKNILYVDQGFHNPLLYSDKITATNVSWTRPGLMDGGEMTCTAKFRYRQEDHKVTVKMTGDDEAEVIFDGQVRAVTPGQAVVFYDGEECLGGGTIDDVYKDGTKLWYV.

Residues 13 to 20 (GMSGGVDS) and M39 contribute to the ATP site. Positions 99–101 (NPD) are interaction with target base in tRNA. The active-site Nucleophile is the C104. C104 and C200 are oxidised to a cystine. G128 contributes to the ATP binding site. The interaction with tRNA stretch occupies residues 150-152 (KDQ). The active-site Cysteine persulfide intermediate is the C200. Positions 309–310 (RY) are interaction with tRNA.

Belongs to the MnmA/TRMU family.

It is found in the cytoplasm. It carries out the reaction S-sulfanyl-L-cysteinyl-[protein] + uridine(34) in tRNA + AH2 + ATP = 2-thiouridine(34) in tRNA + L-cysteinyl-[protein] + A + AMP + diphosphate + H(+). In terms of biological role, catalyzes the 2-thiolation of uridine at the wobble position (U34) of tRNA, leading to the formation of s(2)U34. The chain is tRNA-specific 2-thiouridylase MnmA from Bacillus velezensis (strain DSM 23117 / BGSC 10A6 / LMG 26770 / FZB42) (Bacillus amyloliquefaciens subsp. plantarum).